The primary structure comprises 602 residues: MCGIVGVVGNTNATDILIQGLEKLEYRGYDSAGIFVLDGADNHLVKAVGRIAELSAKTAGVEGTTGIGHTRWATHGKPTEDNAHPHRSETERFVLVHNGVIENYLEIKEEYLAGHHFKGQTDTEIAVHLIGKFAEEDGLSVLEAFKKALHIIRGSYAFALIDSENPDVIYVAKNKSPLLIGLGEGYNMVCSDAMAMIRETNQYMEIHDQELVIVKADSVEVQDYDGNSRERASYTAELDLSDIGKGTYPYYMLKEIDEQPTVMRKLIQAYTDDAGQVVIDPAIIKAVQDADRIYILAAGTSYHAGFASKKMLEELTDTPVELGISSEWGYGMPLLSKKPLFIFISQSGETADSRQVLVKANEMGIPSLTVTNVPGSTLSREANYTMLLHAGPEIAVASTKAYTAQIAALAFLAKAVGEANGNAKAQAFDLVHELSIVAQSIESTLSEKETIEAKVRELLETTRNAFYIGRGQDYYVAMEASLKLKEISYIQCEGFAAGELKHGTIALIEEGTPVLALLSDPVLANHTRGNIQEVAARGAKVLTIAEENVAKDTDDIVLTTVHPYLSPISMVVPTQLVAYFATLHRGLDVDKPRNLAKSVTVE.

C2 (nucleophile; for GATase activity) is an active-site residue. In terms of domain architecture, Glutamine amidotransferase type-2 spans 2 to 217 (CGIVGVVGNT…DQELVIVKAD (216 aa)). The interval 67-87 (IGHTRWATHGKPTEDNAHPHR) is disordered. Residues 77–87 (KPTEDNAHPHR) show a composition bias toward basic and acidic residues. 2 SIS domains span residues 283–422 (IIKA…ANGN) and 455–592 (VREL…VDKP). K597 (for Fru-6P isomerization activity) is an active-site residue.

Homodimer.

Its subcellular location is the cytoplasm. The enzyme catalyses D-fructose 6-phosphate + L-glutamine = D-glucosamine 6-phosphate + L-glutamate. Its function is as follows. Catalyzes the first step in hexosamine metabolism, converting fructose-6P into glucosamine-6P using glutamine as a nitrogen source. This Streptococcus pneumoniae (strain ATCC BAA-255 / R6) protein is Glutamine--fructose-6-phosphate aminotransferase [isomerizing].